The following is a 255-amino-acid chain: Putative cysteine-rich repeat secretory protein 13 (255 aa).

The N-terminal stretch at 1 to 21 (MSSNILAMVAMQLLLIRIVSS) is a signal peptide. Gnk2-homologous domains follow at residues 28-136 (YLNH…SVNT) and 142-252 (YDSF…LYPF).

Belongs to the cysteine-rich repeat secretory protein family.

It is found in the secreted. In Arabidopsis thaliana (Mouse-ear cress), this protein is Putative cysteine-rich repeat secretory protein 13 (CRRSP13).